The following is a 184-amino-acid chain: UPF0397 protein SAS2570 (184 aa).

A run of 5 helical transmembrane segments spans residues 11 to 31 (VVAI…VVIP), 44 to 64 (AFLA…TGLV), 77 to 97 (AWWS…WIGL), 111 to 131 (MIYF…LIAP), and 148 to 168 (QGVI…TILL).

This sequence belongs to the UPF0397 family.

Its subcellular location is the cell membrane. The chain is UPF0397 protein SAS2570 from Staphylococcus aureus (strain MSSA476).